An 89-amino-acid polypeptide reads, in one-letter code: Small ribosomal subunit protein uS15 (89 aa).

This sequence belongs to the universal ribosomal protein uS15 family. Part of the 30S ribosomal subunit. Forms a bridge to the 50S subunit in the 70S ribosome, contacting the 23S rRNA.

Functionally, one of the primary rRNA binding proteins, it binds directly to 16S rRNA where it helps nucleate assembly of the platform of the 30S subunit by binding and bridging several RNA helices of the 16S rRNA. Forms an intersubunit bridge (bridge B4) with the 23S rRNA of the 50S subunit in the ribosome. This Chlamydia felis (strain Fe/C-56) (Chlamydophila felis) protein is Small ribosomal subunit protein uS15.